The sequence spans 791 residues: Outer membrane protein assembly factor BamA (791 aa).

POTRA domains follow at residues 59–130 (NAIA…VTEK), 131–209 (PRID…VEEG), 212–298 (LYIK…VKEG), 301–383 (YKLG…IRKR), and 386–459 (VYIN…VKEQ).

It belongs to the BamA family. As to quaternary structure, part of the Bam complex.

It localises to the cell outer membrane. In terms of biological role, part of the outer membrane protein assembly complex, which is involved in assembly and insertion of beta-barrel proteins into the outer membrane. This Nitratidesulfovibrio vulgaris (strain ATCC 29579 / DSM 644 / CCUG 34227 / NCIMB 8303 / VKM B-1760 / Hildenborough) (Desulfovibrio vulgaris) protein is Outer membrane protein assembly factor BamA.